The sequence spans 196 residues: Guanylate kinase (196 aa).

The disordered stretch occupies residues 1-24 (MPVESGAGNDQPKRLTVLSGPSGV). The Guanylate kinase-like domain occupies 13–191 (KRLTVLSGPS…VCDELLALIA (179 aa)). ATP is bound at residue 20 to 27 (GPSGVGKS).

It belongs to the guanylate kinase family.

The protein localises to the cytoplasm. It catalyses the reaction GMP + ATP = GDP + ADP. Its function is as follows. Essential for recycling GMP and indirectly, cGMP. This is Guanylate kinase from Thermobifida fusca (strain YX).